The sequence spans 366 residues: MTFSKQLFPFVFFLLFLVSLRHASNPNNCSSSSSRPLRCGPLEVPIRFPFCNHARFNLHCTDLNKTVLELPMSGTFLVRDIDYRRQKIYINDPNCLAKRLLTFNISGSPFSPHFDILYTFLSCPNEVVLPSWYPSIPCLSNSTSSFFATSNYSLAQSMLPSCQIVKRLHVPATSPFGETRFSSDLNNQSLLLEWALPDCRAKCLGATKKTGTIYNSNIFSCSFSFLYDSRELFINGNLSSGVLVLVISLSAVTVFVFPTCIAIRLYDSERFDSAIAAATVMQQPREVMARRGLDQSTIETFKKMELGESRRLSGTNGIVCPICLSEYASKETVRFIPECDHCFHVECIDVWLKIHGSCPLCRNSCA.

The signal sequence occupies residues 1–23; that stretch reads MTFSKQLFPFVFFLLFLVSLRHA. A helical membrane pass occupies residues 243–263; the sequence is LVLVISLSAVTVFVFPTCIAI. Residues 320 to 362 form an RING-type; atypical zinc finger; sequence CPICLSEYASKETVRFIPECDHCFHVECIDVWLKIHGSCPLCR.

It belongs to the RING-type zinc finger family. ATL subfamily.

Its subcellular location is the membrane. It catalyses the reaction S-ubiquitinyl-[E2 ubiquitin-conjugating enzyme]-L-cysteine + [acceptor protein]-L-lysine = [E2 ubiquitin-conjugating enzyme]-L-cysteine + N(6)-ubiquitinyl-[acceptor protein]-L-lysine.. The protein operates within protein modification; protein ubiquitination. This Arabidopsis thaliana (Mouse-ear cress) protein is Putative RING-H2 finger protein ATL21C (ATL21C).